The sequence spans 147 residues: Hemoglobin subunit epsilon-4 (147 aa).

In terms of domain architecture, Globin spans 3-147 (HFTTEEKAAV…VANALAHKYH (145 aa)). Heme b is bound by residues histidine 64 and histidine 93.

Belongs to the globin family. Red blood cells.

Functionally, hemoglobin epsilon chain is a beta-type chain found in early embryos. This chain is Hemoglobin subunit epsilon-4 (HBE4), found in Bos taurus (Bovine).